Here is a 109-residue protein sequence, read N- to C-terminus: U4-lycotoxin-Ls1c (109 aa).

The signal sequence occupies residues 1–22; sequence MKVLVLFSVLFLTLFSYSSTEA. Residues 23-44 constitute a propeptide that is removed on maturation; it reads IDEFDSDAEDDMLSLMANEQVR. Positions 45 to 88 are knottin domain; the sequence is AKACTPRLHDCSHDRHSCCRGELFKDVCYCFYPEGEDITEVCSC. 4 cysteine pairs are disulfide-bonded: C48-C63, C55-C72, C62-C88, and C74-C86. The linear cationic cytotoxin domain stretch occupies residues 89–108; it reads QQPKSHKYIEKVVDKAKTVV.

Belongs to the neurotoxin 19 (CSTX) family. 05 (U4-Lctx) subfamily. Expressed by the venom gland.

It is found in the secreted. In terms of biological role, enhances the high-affinity desensitization of human P2RX3 purinoceptors. This chain is U4-lycotoxin-Ls1c, found in Lycosa singoriensis (Wolf spider).